A 560-amino-acid chain; its full sequence is Oxygen-dependent choline dehydrogenase (560 aa).

6–35 (DYIIIGGGSAGSVLGSRISEDVSNNVLVLE) lines the FAD pocket. H472 serves as the catalytic Proton acceptor.

The protein belongs to the GMC oxidoreductase family. It depends on FAD as a cofactor.

It carries out the reaction choline + A = betaine aldehyde + AH2. The catalysed reaction is betaine aldehyde + NAD(+) + H2O = glycine betaine + NADH + 2 H(+). It functions in the pathway amine and polyamine biosynthesis; betaine biosynthesis via choline pathway; betaine aldehyde from choline (cytochrome c reductase route): step 1/1. Involved in the biosynthesis of the osmoprotectant glycine betaine. Catalyzes the oxidation of choline to betaine aldehyde and betaine aldehyde to glycine betaine at the same rate. This Staphylococcus saprophyticus subsp. saprophyticus (strain ATCC 15305 / DSM 20229 / NCIMB 8711 / NCTC 7292 / S-41) protein is Oxygen-dependent choline dehydrogenase.